The primary structure comprises 72 residues: Large ribosomal subunit protein bL31 (72 aa).

Residues Cys16, Cys18, Cys38, and Cys41 each coordinate Zn(2+).

This sequence belongs to the bacterial ribosomal protein bL31 family. Type A subfamily. Part of the 50S ribosomal subunit. Requires Zn(2+) as cofactor.

Its function is as follows. Binds the 23S rRNA. This Francisella tularensis subsp. holarctica (strain LVS) protein is Large ribosomal subunit protein bL31.